The primary structure comprises 122 residues: Basic phospholipase A2 PL-X (122 aa).

Intrachain disulfides connect Cys26/Cys115, Cys28/Cys44, Cys43/Cys95, Cys49/Cys122, Cys50/Cys88, Cys57/Cys81, and Cys75/Cys86. Ca(2+)-binding residues include Tyr27, Gly29, and Gly31. The active site involves His47. Residue Asp48 coordinates Ca(2+). The active site involves Asp89.

Belongs to the phospholipase A2 family. Group II subfamily. D49 sub-subfamily. The cofactor is Ca(2+). Expressed by the venom gland.

Its subcellular location is the secreted. The catalysed reaction is a 1,2-diacyl-sn-glycero-3-phosphocholine + H2O = a 1-acyl-sn-glycero-3-phosphocholine + a fatty acid + H(+). In terms of biological role, PLA2 catalyzes the calcium-dependent hydrolysis of the 2-acyl groups in 3-sn-phosphoglycerides. This Protobothrops flavoviridis (Habu) protein is Basic phospholipase A2 PL-X.